A 162-amino-acid chain; its full sequence is Ribosome maturation factor RimM (162 aa).

Residues 86–160 (EGRYYYFALI…SIHVDPIPGL (75 aa)) enclose the PRC barrel domain.

This sequence belongs to the RimM family. Binds ribosomal protein uS19.

It localises to the cytoplasm. In terms of biological role, an accessory protein needed during the final step in the assembly of 30S ribosomal subunit, possibly for assembly of the head region. Essential for efficient processing of 16S rRNA. May be needed both before and after RbfA during the maturation of 16S rRNA. It has affinity for free ribosomal 30S subunits but not for 70S ribosomes. The sequence is that of Ribosome maturation factor RimM from Thermus thermophilus (strain ATCC 27634 / DSM 579 / HB8).